Here is a 450-residue protein sequence, read N- to C-terminus: Akuammiline synthase 2 (450 aa).

The Proton acceptor role is filled by His154. The Nuclear localization signal motif lies at 218-225; it reads MRRFVFDA. Asp376 acts as the Proton acceptor in catalysis.

Belongs to the plant acyltransferase family. As to quaternary structure, monomer.

The protein localises to the cytoplasm. It localises to the nucleus. The enzyme catalyses rhazimol + acetyl-CoA = akuammiline + CoA + H(+). It functions in the pathway alkaloid biosynthesis. Acyltransferase involved in the biosynthesis of akuammilan monoterpene indole alkaloids (MIAs) natural products, components with various biological properties such as antidiabetic, antibacterial, anti-inflammatory, anticancer, and antimalarial activities. Catalyzes the conversion of rhazimol to akuammiline. The polypeptide is Akuammiline synthase 2 (Alstonia scholaris (Dogbane)).